A 309-amino-acid polypeptide reads, in one-letter code: Porphobilinogen deaminase (309 aa).

The residue at position 244 (Cys-244) is an S-(dipyrrolylmethanemethyl)cysteine.

Belongs to the HMBS family. Monomer. It depends on dipyrromethane as a cofactor.

It carries out the reaction 4 porphobilinogen + H2O = hydroxymethylbilane + 4 NH4(+). The protein operates within porphyrin-containing compound metabolism; protoporphyrin-IX biosynthesis; coproporphyrinogen-III from 5-aminolevulinate: step 2/4. Its function is as follows. Tetrapolymerization of the monopyrrole PBG into the hydroxymethylbilane pre-uroporphyrinogen in several discrete steps. The protein is Porphobilinogen deaminase of Listeria welshimeri serovar 6b (strain ATCC 35897 / DSM 20650 / CCUG 15529 / CIP 8149 / NCTC 11857 / SLCC 5334 / V8).